Consider the following 94-residue polypeptide: DNA-directed RNA polymerase subunit omega (94 aa).

This sequence belongs to the RNA polymerase subunit omega family. In terms of assembly, the RNAP catalytic core consists of 2 alpha, 1 beta, 1 beta' and 1 omega subunit. When a sigma factor is associated with the core the holoenzyme is formed, which can initiate transcription.

The catalysed reaction is RNA(n) + a ribonucleoside 5'-triphosphate = RNA(n+1) + diphosphate. Its function is as follows. Promotes RNA polymerase assembly. Latches the N- and C-terminal regions of the beta' subunit thereby facilitating its interaction with the beta and alpha subunits. The sequence is that of DNA-directed RNA polymerase subunit omega from Limosilactobacillus fermentum (strain NBRC 3956 / LMG 18251) (Lactobacillus fermentum).